A 1213-amino-acid polypeptide reads, in one-letter code: DNA-directed RNA polymerase subunit beta' (1213 aa).

Residues C60, C62, C75, and C78 each coordinate Zn(2+). Mg(2+)-binding residues include D450, D452, and D454. Residues C819, C893, C900, and C903 each coordinate Zn(2+).

Belongs to the RNA polymerase beta' chain family. As to quaternary structure, the RNAP catalytic core consists of 2 alpha, 1 beta, 1 beta' and 1 omega subunit. When a sigma factor is associated with the core the holoenzyme is formed, which can initiate transcription. Mg(2+) serves as cofactor. Zn(2+) is required as a cofactor.

It catalyses the reaction RNA(n) + a ribonucleoside 5'-triphosphate = RNA(n+1) + diphosphate. Functionally, DNA-dependent RNA polymerase catalyzes the transcription of DNA into RNA using the four ribonucleoside triphosphates as substrates. The protein is DNA-directed RNA polymerase subunit beta' of Streptococcus pyogenes serotype M6 (strain ATCC BAA-946 / MGAS10394).